A 262-amino-acid polypeptide reads, in one-letter code: Cell division protein ZapD (262 aa).

Belongs to the ZapD family. In terms of assembly, interacts with FtsZ.

It localises to the cytoplasm. In terms of biological role, cell division factor that enhances FtsZ-ring assembly. Directly interacts with FtsZ and promotes bundling of FtsZ protofilaments, with a reduction in FtsZ GTPase activity. The sequence is that of Cell division protein ZapD from Nitrosomonas europaea (strain ATCC 19718 / CIP 103999 / KCTC 2705 / NBRC 14298).